We begin with the raw amino-acid sequence, 343 residues long: NADP-dependent alkenal double bond reductase P2 (343 aa).

The substrate site is built by tyrosine 52 and tyrosine 79. NADP(+)-binding positions include 164–167 (GAVG), lysine 190, tyrosine 206, asparagine 230, 252–258 (CGMISQY), 282–284 (FVV), and asparagine 332.

Belongs to the NADP-dependent oxidoreductase L4BD family. Homodimer.

It carries out the reaction an n-alkanal + NAD(+) = an alk-2-enal + NADH + H(+). It catalyses the reaction an n-alkanal + NADP(+) = an alk-2-enal + NADPH + H(+). Catalyzes the reduction of the 7-8 double bond of phenylpropanal substrates, such as p-coumaryl aldehyde and coniferyl aldehyde (in vitro). Has activity towards toxic substrates, such as 4-hydroxy-(2E)-nonenal (in vitro). May play a distinct role in plant antioxidant defense and is possibly involved in NAD(P)/NAD(P)h homeostasis. The protein is NADP-dependent alkenal double bond reductase P2 (P2) of Arabidopsis thaliana (Mouse-ear cress).